A 428-amino-acid chain; its full sequence is Immunoglobulin superfamily containing leucine-rich repeat protein (428 aa).

The N-terminal stretch at 1-18 (MQELRLLCLVVLVGLAQA) is a signal peptide. Positions 19 to 50 (CPEPCECGEKYGFHIADCAYRDLQAVPSGFPA) constitute an LRRNT domain. N51 carries an N-linked (GlcNAc...) asparagine glycan. LRR repeat units lie at residues 51–72 (NVTT…AFRE), 75–96 (RLQS…ALAS), 99–122 (QLKS…HSLS), 123–144 (ALQL…AFRS), and 147–168 (ALRS…TFAP). One can recognise an LRRCT domain in the interval 180 to 231 (NPFDCTCGIVWFKTWALTTAVSIPEQDNITCTSPHVLKGTRLNRLLPLPCSA). An Ig-like domain is found at 232–343 (PSVQLTYQPS…GSAESSVNVA (112 aa)). C257 and C327 form a disulfide bridge. N-linked (GlcNAc...) asparagine glycosylation is present at N309.

The protein localises to the secreted. This is Immunoglobulin superfamily containing leucine-rich repeat protein (ISLR) from Bos taurus (Bovine).